Consider the following 165-residue polypeptide: SsrA-binding protein (165 aa).

Belongs to the SmpB family.

The protein localises to the cytoplasm. Functionally, required for rescue of stalled ribosomes mediated by trans-translation. Binds to transfer-messenger RNA (tmRNA), required for stable association of tmRNA with ribosomes. tmRNA and SmpB together mimic tRNA shape, replacing the anticodon stem-loop with SmpB. tmRNA is encoded by the ssrA gene; the 2 termini fold to resemble tRNA(Ala) and it encodes a 'tag peptide', a short internal open reading frame. During trans-translation Ala-aminoacylated tmRNA acts like a tRNA, entering the A-site of stalled ribosomes, displacing the stalled mRNA. The ribosome then switches to translate the ORF on the tmRNA; the nascent peptide is terminated with the 'tag peptide' encoded by the tmRNA and targeted for degradation. The ribosome is freed to recommence translation, which seems to be the essential function of trans-translation. The polypeptide is SsrA-binding protein (Prochlorococcus marinus (strain MIT 9515)).